The sequence spans 280 residues: Energy-coupling factor transporter ATP-binding protein EcfA2 (280 aa).

The ABC transporter domain maps to 3–245 (INLQNVSYTY…VSLLEKKQLG (243 aa)). 40 to 47 (GHTGSGKS) is a binding site for ATP.

This sequence belongs to the ABC transporter superfamily. Energy-coupling factor EcfA family. Forms a stable energy-coupling factor (ECF) transporter complex composed of 2 membrane-embedded substrate-binding proteins (S component), 2 ATP-binding proteins (A component) and 2 transmembrane proteins (T component).

The protein localises to the cell membrane. Functionally, ATP-binding (A) component of a common energy-coupling factor (ECF) ABC-transporter complex. Unlike classic ABC transporters this ECF transporter provides the energy necessary to transport a number of different substrates. The polypeptide is Energy-coupling factor transporter ATP-binding protein EcfA2 (Streptococcus pyogenes serotype M3 (strain ATCC BAA-595 / MGAS315)).